Here is a 384-residue protein sequence, read N- to C-terminus: DNA dC-&gt;dU-editing enzyme APOBEC-3G (384 aa).

An essential for cytoplasmic localization region spans residues 1–60; it reads MNPQFRNMVDGMDPHKFSYNFKNRPILSRRNTVWLCYEVKTKGPSRPPLDAKIFRGQVYF. CMP/dCMP-type deaminase domains follow at residues 29–138 and 214–328; these read RRNT…LRSL and GRHE…LRTL. At T32 the chain carries Phosphothreonine; by PKA. Positions 65, 97, and 100 each coordinate Zn(2+). Residues 209-336 are necessary for homooligomerization; that stretch reads EPCVEGRHET…TLDEAEAKIS (128 aa). The interval 213–215 is interaction with DNA; the sequence is EGR. At T218 the chain carries Phosphothreonine; by PKA and CAMK2. H257 contributes to the Zn(2+) binding site. E259 (proton donor) is an active-site residue. Zn(2+)-binding residues include C288 and C291. The interaction with DNA stretch occupies residues 313-320; sequence RIYDDQGR.

This sequence belongs to the cytidine and deoxycytidylate deaminase family. As to quaternary structure, homodimer. Requires Zn(2+) as cofactor.

Its subcellular location is the cytoplasm. It is found in the nucleus. The protein localises to the P-body. The enzyme catalyses a 2'-deoxycytidine in single-stranded DNA + H2O + H(+) = a 2'-deoxyuridine in single-stranded DNA + NH4(+). Functionally, DNA deaminase (cytidine deaminase) which acts as an inhibitor of retrovirus replication and retrotransposon mobility. After the penetration of retroviral nucleocapsids into target cells of infection and the initiation of reverse transcription, it can induce the conversion of cytosine to uracil in the minus-sense single-strand viral DNA, leading to G-to-A hypermutations in the subsequent plus-strand viral DNA. The resultant detrimental levels of mutations in the proviral genome, along with a deamination-independent mechanism that works prior to the proviral integration, together exert efficient antiretroviral effects in infected target cells. Selectively targets single-stranded DNA and does not deaminate double-stranded DNA or single- or double-stranded RNA. The polypeptide is DNA dC-&gt;dU-editing enzyme APOBEC-3G (APOBEC3G) (Pongo pygmaeus (Bornean orangutan)).